Reading from the N-terminus, the 306-residue chain is Pantothenate kinase (306 aa).

Gly-91–Ser-98 is a binding site for ATP.

This sequence belongs to the prokaryotic pantothenate kinase family.

Its subcellular location is the cytoplasm. It catalyses the reaction (R)-pantothenate + ATP = (R)-4'-phosphopantothenate + ADP + H(+). Its pathway is cofactor biosynthesis; coenzyme A biosynthesis; CoA from (R)-pantothenate: step 1/5. This chain is Pantothenate kinase, found in Streptococcus thermophilus (strain ATCC BAA-491 / LMD-9).